The following is a 266-amino-acid chain: Zinc transporter ZupT (266 aa).

The next 8 membrane-spanning stretches (helical) occupy residues 8–28 (LLLTLLAGLSTGIGSAMALAV), 36–56 (LALSLGFSAGIMLYVSFMEII), 71–91 (AGAWVSTISFFGGMLFTWAID), 123–143 (GIFTAAAIAIHNFPEGMAVFF), 152–172 (GIVIASTIALHNIPEGMAVAV), 185–205 (FSLSFLSGLAEPLGALVGYTL), 209–229 (FLTPFVLGIVLASVSGIMVYI), and 246–266 (LAITGLIAGMAVMALSLLLLT). 2 residues coordinate Fe(2+): asparagine 134 and glutamate 137. The Zn(2+) site is built by glutamate 137 and histidine 162. 3 residues coordinate Fe(2+): asparagine 163, glutamate 166, and glutamate 195. Glutamate 166 is a binding site for Zn(2+).

This sequence belongs to the ZIP transporter (TC 2.A.5) family. ZupT subfamily.

Its subcellular location is the cell inner membrane. The catalysed reaction is Zn(2+)(in) = Zn(2+)(out). Functionally, mediates zinc uptake. May also transport other divalent cations. The protein is Zinc transporter ZupT of Chlorobium luteolum (strain DSM 273 / BCRC 81028 / 2530) (Pelodictyon luteolum).